The following is a 704-amino-acid chain: MRLHYITVFDPSRSTNENDTFKQLLLFHYFGTTDSIPSLNEKLSIIGVIQGIWSLTSSCVNKDGEDLEKIIELNNDIIFCIKVESRFFISLAISNISDDQSAIPLQYLSAYLWLSYRFFKLLNGSFSGFNKDFRKLTDLLNEFVIPFWNDIYLNLETVTNRSFTVMWPGFYKRANFQHSSYNPGEKNNVEESWDAIILQNILLDKKSYLGLKDILVYHLPKRTKAANRESMGTKTYGLVRNFTSDLNTLPDISNWLYHLHCTYGEISSHILTGNVHFKEELQVEEEQERSRDTNGRDEEESQEQQRREHQETTQNNTSELSLSERVIHNVTLPISFAYDAIHEVSTTTGVSGSLSMIMDYVPKPHWPFISSSNKSADKNNYSNSNDNANSNAPLMAQSEAVGGTIGNSRFGFLISPLNSDLLPSSYQALKLNLNFENSKDKEDFYNCLFWYFDDFLIVIVCDPDFNKICERDYLKDLSFQLCQSMECLNNEILNSQNCDNVESFAYVIRDNVTKEIDSSVPFGSPKFTSDESISTLQLAINGIDQFINDNSNSLSLANWNPITIMGGSNAISKKNTTEGFGNGVNDKTQKFKRKYLNFLNLMSAEKLWDLQVDVLQFLTSLQNSKRDPDYFQEERLLKLNNGVLCYIKENNSNLIIIIKNWFQNNGTSKAAKQRNRFSSDSSKGSSLFQSLGRDVTDWWESREI.

Residues 281 to 322 (LQVEEEQERSRDTNGRDEEESQEQQRREHQETTQNNTSELSL) are disordered.

This sequence belongs to the CCZ1 family. In terms of assembly, forms a complex with MON1. Interacts with YPT7. Interacts with YPT10 with a strong preference for the GTP-associated form; may interact with other small GTPase Rab5 homologs but at much lower levels.

The protein resides in the endosome. Its subcellular location is the multivesicular body membrane. The protein localises to the prevacuolar compartment membrane. It localises to the vacuole membrane. It is found in the vesicle. With respect to regulation, the YPT7 guanine nucleotide-exchange factor (GEF) activity of the MON1-CCZ1 complex is autoinhibited by the N-terminal disordered region of MON1. Functionally, in complex with MON1, is required for multiple vacuole delivery pathways including the cytoplasm to vacuole transport (Cvt), autophagy, pexophagy and endocytosis. The MON1-CCZ1 complex acts at the fusion of vesicles with the vacuole, through its regulation of the SNARE complex during the coordinated priming and docking stages of fusion, and particularly at the stage of tethering/docking. The MON1-CCZ1 complex is recruited to membranes enriched in charged lipids, particularly phosphatidylinositol 3-phosphate (PtdIns3P), by GTP-associated small GTPase RAB5 homologs (YPT10, YPT52, YPT53 and VPS21). The MON1-CCZ1 complex recruits GDP-associated small GTPase YPT7 to membranes and acts as a guanine nucleotide-exchange factor (GEF), promoting nucleotide exchange on YPT7 and triggering endosomal maturation by recruiting downstream effectors such as components of the HOPS tethering complex. This is Vacuolar fusion protein CCZ1 (CCZ1) from Saccharomyces cerevisiae (strain ATCC 204508 / S288c) (Baker's yeast).